The following is a 158-amino-acid chain: NADPH-dependent 7-cyano-7-deazaguanine reductase (158 aa).

The active-site Thioimide intermediate is the C56. The active-site Proton donor is D63. Residues 78–80 and 97–98 contribute to the substrate site; these read LES and HE.

It belongs to the GTP cyclohydrolase I family. QueF type 1 subfamily.

The protein resides in the cytoplasm. It carries out the reaction 7-aminomethyl-7-carbaguanine + 2 NADP(+) = 7-cyano-7-deazaguanine + 2 NADPH + 3 H(+). It functions in the pathway tRNA modification; tRNA-queuosine biosynthesis. Functionally, catalyzes the NADPH-dependent reduction of 7-cyano-7-deazaguanine (preQ0) to 7-aminomethyl-7-deazaguanine (preQ1). This Nitrobacter winogradskyi (strain ATCC 25391 / DSM 10237 / CIP 104748 / NCIMB 11846 / Nb-255) protein is NADPH-dependent 7-cyano-7-deazaguanine reductase.